A 393-amino-acid polypeptide reads, in one-letter code: Ethanol acetyltransferase 1 (393 aa).

A mitochondrion-targeting transit peptide spans 1-25; sequence MHFTRTLFNQVASKASRQLPVQKRV. The region spanning 49–151 is the AB hydrolase-1 domain; sequence PIVFVHGIFG…GVIIDNSPIE (103 aa). Catalysis depends on charge relay system residues serine 122, aspartate 146, and histidine 296. The span at 343–354 shows a compositional bias: basic and acidic residues; sequence AKHAQQIEELRK. The interval 343 to 393 is disordered; sequence AKHAQQIEELRKVTSTSESSIPHSTQSSEQAFTENIDLARQEREHQKSVSA. A compositionally biased stretch (polar residues) spans 355-375; the sequence is VTSTSESSIPHSTQSSEQAFT. Positions 379 to 393 are enriched in basic and acidic residues; that stretch reads DLARQEREHQKSVSA.

The protein belongs to the AB hydrolase superfamily.

It is found in the mitochondrion. The enzyme catalyses ethanol + acetyl-CoA = ethyl acetate + CoA. It catalyses the reaction acetyl-CoA + H2O = acetate + CoA + H(+). The catalysed reaction is ethyl acetate + H2O = ethanol + acetate + H(+). Functionally, alcohol acetyltransferase that catalyzes the synthesis of ethyl acetate from ethanol and acetyl-CoA. Can also function as a thioesterase by hydrolyzing acetyl-CoA in the absence of ethanol, as well as esterase hydrolyzing ethyl acetate. This Wickerhamomyces ciferrii (strain ATCC 14091 / BCRC 22168 / CBS 111 / JCM 3599 / NBRC 0793 / NRRL Y-1031 F-60-10) (Yeast) protein is Ethanol acetyltransferase 1 (EAT1).